The primary structure comprises 267 residues: REH2-associated factor 2 (267 aa).

In terms of assembly, component of the REH2-associated complex (REH2C) composed of helicase REH2, associated factors H2F1 and H2F2, and mRNAs at various editing stages; the formation of the complex is RNA-independent. Interacts with various editing complexes including the RNA editing core (RECC) complex, the gRNA-binding (GRBC) complex (also known as the MRB1 complex) and the RNA editing mediator (REMC) complex.

The protein localises to the mitochondrion. In terms of biological role, may play a role in mitochondrial mRNA editing by facilitating the association of the gRNA-binding (GRBC) complex with the RNA editing core (RECC) complex. However, appears to be dispensable for mRNA editing per se. The chain is REH2-associated factor 2 from Trypanosoma brucei brucei (strain 927/4 GUTat10.1).